A 317-amino-acid polypeptide reads, in one-letter code: Taste receptor type 2 member 14 (317 aa).

The Extracellular portion of the chain corresponds to 1 to 7 (MGDVIKS). The helical transmembrane segment at 8-28 (IFTFVLIVEFIIGNLGNSFIA) threads the bilayer. Residues 29–55 (LVNCIDWVKGRKISSVDQILTALAISR) are Cytoplasmic-facing. A helical transmembrane segment spans residues 56–76 (ISLVWLIFGSWCVSVFLPALF). The Extracellular segment spans residues 77–87 (ATEKMFRMLTN). Positions 86 and 89 each coordinate cholesterol. Residues 88–108 (IWTVINHFSVWLATGLGTFYF) form a helical membrane-spanning segment. The Cytoplasmic segment spans residues 109–129 (LKIANFSNSIFLYLKWRVKKV). A helical transmembrane segment spans residues 130–150 (VLVLLLVTSVFLFLNIALINI). The Extracellular portion of the chain corresponds to 151-184 (HINASINGYRRNKTCSSDSSNFTRFSSLIVLTST). N153, N162, and N171 each carry an N-linked (GlcNAc...) asparagine glycan. V180 serves as a coordination point for cholesterol. Residues 185-205 (VFIFIPFTLSLAMFLLLIFSL) traverse the membrane as a helical segment. At 206–232 (WKHRKKMQHXVKRSGDASTKAHRGVKS) the chain is on the cytoplasmic side. Residues 233–253 (VITFFLLYAIFCLSFFISVWT) traverse the membrane as a helical segment. Over 254-261 (SERLEENL) the chain is Extracellular. Residues 262 to 282 (IILSQVMGMAYPSCHSCVLIL) traverse the membrane as a helical segment. Residues S265 and M268 each contribute to the cholesterol site. Topologically, residues 283-317 (GNKKLRQASLSVLLWLRYMFKDGEPSGHKEFRESS) are cytoplasmic.

Belongs to the G-protein coupled receptor T2R family. In terms of assembly, core component of the TAS2R14-GNAI1 complex, consisting of TAS2R14, GNAI1, GNB1 and GNG2; within the complex interacts with GNAI1. Core component of the TAS2R14-GNAT3 complex, consisting of TAS2R14, GNAT3, GNB1 and GNG2; within the complex interacts with GNAT3. Core component of the TAS2R14-GNAS2 complex, consisting of TAS2R14, GNAS2, GNB1 and GNG2; within the complex interacts with GNAS2.

The protein localises to the membrane. The enzyme catalyses Ca(2+)(in) = Ca(2+)(out). It carries out the reaction 3',5'-cyclic AMP(in) = 3',5'-cyclic AMP(out). Basal activity is enhanced by binding to bitter tastants, such as flufenamic acid and aristolochic acid. Regulated by cholesterol in a concentration-dependent manner. In terms of biological role, gustducin-linked G-protein coupled receptor that plays a role in the perception of bitterness. The activity of this receptor stimulates GNAT3, activating the gustducin G-protein pathway. Likely plays a role in sensing the chemical composition of the gastrointestinal content and other extra-oral tissues via the inhibitory G-protein pathways. The sequence is that of Taste receptor type 2 member 14 (TAS2R14) from Gorilla gorilla gorilla (Western lowland gorilla).